A 352-amino-acid chain; its full sequence is Phenylalanine--tRNA ligase alpha subunit (352 aa).

E258 contributes to the Mg(2+) binding site.

Belongs to the class-II aminoacyl-tRNA synthetase family. Phe-tRNA synthetase alpha subunit type 1 subfamily. As to quaternary structure, tetramer of two alpha and two beta subunits. Mg(2+) serves as cofactor.

The protein localises to the cytoplasm. It carries out the reaction tRNA(Phe) + L-phenylalanine + ATP = L-phenylalanyl-tRNA(Phe) + AMP + diphosphate + H(+). The protein is Phenylalanine--tRNA ligase alpha subunit of Staphylococcus carnosus (strain TM300).